Consider the following 173-residue polypeptide: Nicotinamide-nucleotide adenylyltransferase (173 aa).

Belongs to the archaeal NMN adenylyltransferase family.

The protein localises to the cytoplasm. It catalyses the reaction beta-nicotinamide D-ribonucleotide + ATP + H(+) = diphosphate + NAD(+). It participates in cofactor biosynthesis; NAD(+) biosynthesis; NAD(+) from nicotinamide D-ribonucleotide: step 1/1. In Methanosarcina barkeri (strain Fusaro / DSM 804), this protein is Nicotinamide-nucleotide adenylyltransferase.